We begin with the raw amino-acid sequence, 376 residues long: Anhydro-N-acetylmuramic acid kinase (376 aa).

16–23 (GTSMDGVD) contributes to the ATP binding site.

It belongs to the anhydro-N-acetylmuramic acid kinase family.

It catalyses the reaction 1,6-anhydro-N-acetyl-beta-muramate + ATP + H2O = N-acetyl-D-muramate 6-phosphate + ADP + H(+). It functions in the pathway amino-sugar metabolism; 1,6-anhydro-N-acetylmuramate degradation. It participates in cell wall biogenesis; peptidoglycan recycling. Its function is as follows. Catalyzes the specific phosphorylation of 1,6-anhydro-N-acetylmuramic acid (anhMurNAc) with the simultaneous cleavage of the 1,6-anhydro ring, generating MurNAc-6-P. Is required for the utilization of anhMurNAc either imported from the medium or derived from its own cell wall murein, and thus plays a role in cell wall recycling. In Paraburkholderia xenovorans (strain LB400), this protein is Anhydro-N-acetylmuramic acid kinase.